The primary structure comprises 193 residues: uncharacterized protein (193 aa).

Residues 119–143 (LAGSLLAATGMTLGIFGMGITGTCW) traverse the membrane as a helical segment.

The protein localises to the mitochondrion membrane. This is an uncharacterized protein from Saccharomyces cerevisiae (strain ATCC 204508 / S288c) (Baker's yeast).